The primary structure comprises 380 residues: Queuine tRNA-ribosyltransferase (380 aa).

Asp93 acts as the Proton acceptor in catalysis. Substrate-binding positions include 93-97 (DSGGF), Asp147, Gln198, and Gly225. Residues 256-262 (GVGLPSN) form an RNA binding region. Residue Asp275 is the Nucleophile of the active site. An RNA binding; important for wobble base 34 recognition region spans residues 280-284 (ARNGR). Zn(2+)-binding residues include Cys313, Cys315, Cys318, and His344.

This sequence belongs to the queuine tRNA-ribosyltransferase family. As to quaternary structure, homodimer. Within each dimer, one monomer is responsible for RNA recognition and catalysis, while the other monomer binds to the replacement base PreQ1. It depends on Zn(2+) as a cofactor.

The catalysed reaction is 7-aminomethyl-7-carbaguanine + guanosine(34) in tRNA = 7-aminomethyl-7-carbaguanosine(34) in tRNA + guanine. Its pathway is tRNA modification; tRNA-queuosine biosynthesis. Functionally, catalyzes the base-exchange of a guanine (G) residue with the queuine precursor 7-aminomethyl-7-deazaguanine (PreQ1) at position 34 (anticodon wobble position) in tRNAs with GU(N) anticodons (tRNA-Asp, -Asn, -His and -Tyr). Catalysis occurs through a double-displacement mechanism. The nucleophile active site attacks the C1' of nucleotide 34 to detach the guanine base from the RNA, forming a covalent enzyme-RNA intermediate. The proton acceptor active site deprotonates the incoming PreQ1, allowing a nucleophilic attack on the C1' of the ribose to form the product. After dissociation, two additional enzymatic reactions on the tRNA convert PreQ1 to queuine (Q), resulting in the hypermodified nucleoside queuosine (7-(((4,5-cis-dihydroxy-2-cyclopenten-1-yl)amino)methyl)-7-deazaguanosine). The chain is Queuine tRNA-ribosyltransferase from Clostridium perfringens (strain 13 / Type A).